Consider the following 1214-residue polypeptide: Reverse gyrase (1214 aa).

An RG N-terminal-type zinc finger spans residues 1–37 (MKAIYRDMCPNCRGAITDERLAAKNPCDACLDEPISM). Cys-9, Cys-12, Cys-27, and Cys-30 together coordinate Zn(2+). Residues Gln-89 and 106-113 (APTGMGKS) each bind ATP. One can recognise a Helicase ATP-binding domain in the interval 93 to 252 (VKRIIKGKSF…WEIIKLKKQL (160 aa)). The short motif at 213-216 (DDVD) is the DEAD box element. The interval 635–1214 (DLVKSALMIV…YEEILRYVKS (580 aa)) is topoisomerase I. A Toprim domain is found at 639 to 802 (SALMIVESPN…VIKRIEFHEV (164 aa)). Residue Glu-645 coordinates Mg(2+). The segment at 719 to 748 (IKRCRDCGHQFVDWEEKGVCPRCGSRNVYD) adopts an RG C-terminal-type zinc-finger fold. Cys-722, Cys-725, Cys-738, and Cys-741 together coordinate Zn(2+). Asp-771 lines the Mg(2+) pocket. A Topo IA-type catalytic domain is found at 818-1212 (NEDRVNAQLV…ELYEEILRYV (395 aa)). The active-site O-(5'-phospho-DNA)-tyrosine intermediate is the Tyr-955.

The protein in the N-terminal section; belongs to the DEAD box helicase family. DDVD subfamily. In the C-terminal section; belongs to the type IA topoisomerase family. Monomer. It depends on Zn(2+) as a cofactor. Mg(2+) serves as cofactor.

The protein localises to the cytoplasm. It carries out the reaction ATP + H2O = ADP + phosphate + H(+). Its function is as follows. Modifies the topological state of DNA by introducing positive supercoils in an ATP-dependent process. Increases the linking number in steps of +1. Binds to single-stranded DNA, transiently cleaves and then rejoins the ends, introducing a positive supercoil in the process. The scissile phosphodiester is attacked by the catalytic tyrosine of the enzyme, resulting in the formation of a DNA-(5'-phosphotyrosyl)-enzyme intermediate. Probably involved in rewinding DNA strands in regions of the chromosome that have opened up to allow replication, transcription, DNA repair and/or for DNA protection. The protein is Reverse gyrase of Pyrococcus furiosus (strain ATCC 43587 / DSM 3638 / JCM 8422 / Vc1).